Here is a 437-residue protein sequence, read N- to C-terminus: tRNA modification GTPase MnmE (437 aa).

The (6S)-5-formyl-5,6,7,8-tetrahydrofolate site is built by arginine 21, glutamate 79, and arginine 119. The 142-residue stretch at 223 to 364 (GFRVVLAGPP…FRSALIAHAR (142 aa)) folds into the TrmE-type G domain. Residues 233 to 238 (NAGKST), 252 to 258 (AAEPGTT), and 277 to 280 (DTAG) each bind GTP. Mg(2+) is bound by residues serine 237 and threonine 258. Lysine 437 serves as a coordination point for (6S)-5-formyl-5,6,7,8-tetrahydrofolate.

It belongs to the TRAFAC class TrmE-Era-EngA-EngB-Septin-like GTPase superfamily. TrmE GTPase family. In terms of assembly, homodimer. Heterotetramer of two MnmE and two MnmG subunits. It depends on K(+) as a cofactor.

The protein resides in the cytoplasm. Exhibits a very high intrinsic GTPase hydrolysis rate. Involved in the addition of a carboxymethylaminomethyl (cmnm) group at the wobble position (U34) of certain tRNAs, forming tRNA-cmnm(5)s(2)U34. The chain is tRNA modification GTPase MnmE from Novosphingobium aromaticivorans (strain ATCC 700278 / DSM 12444 / CCUG 56034 / CIP 105152 / NBRC 16084 / F199).